The sequence spans 492 residues: Solute carrier family 2, facilitated glucose transporter member 1 (492 aa).

M1 bears the N-acetylmethionine mark. The Cytoplasmic portion of the chain corresponds to 1-11 (MEPSSKKVTGR). Residues 12 to 33 (LMLAVGGAVLGSLQFGYNTGVI) form a helical membrane-spanning segment. Residues 34–66 (NAPQKVIEEFYNQTWNHRYGESIPSTTLTTLWS) are Extracellular-facing. N45 is a glycosylation site (N-linked (GlcNAc...) asparagine). Residues 67 to 87 (LSVAIFSVGGMIGSFSVGLFV) traverse the membrane as a helical segment. The Cytoplasmic portion of the chain corresponds to 88-90 (NRF). Residues 91–112 (GRRNSMLMMNLLAFVSAVLMGF) traverse the membrane as a helical segment. Residues 113–120 (SKLGKSFE) lie on the Extracellular side of the membrane. Residues 121–144 (MLILGRFIIGVYCGLTTGFVPMYV) traverse the membrane as a helical segment. Residues 145 to 155 (GEVSPTALRGA) lie on the Cytoplasmic side of the membrane. A helical membrane pass occupies residues 156-176 (LGTLHQLGIVVGILIAQVFGL). Q161 serves as a coordination point for D-glucose. Topologically, residues 177–185 (DSIMGNADL) are extracellular. The chain crosses the membrane as a helical span at residues 186–206 (WPLLLSVIFIPALLQCILLPF). Topologically, residues 207 to 271 (CPESPRFLLI…LFRSPAYRQP (65 aa)) are cytoplasmic. A Phosphoserine modification is found at S226. The chain crosses the membrane as a helical span at residues 272-293 (ILIAVVLQLSQQLSGINAVFYY). D-glucose contacts are provided by residues 282–283 (QQ) and N288. Residues 294-306 (STSIFEKAGVQQP) are Extracellular-facing. Residues 307-328 (VYATIGSGIVNTAFTVVSLFVV) form a helical membrane-spanning segment. N317 contacts D-glucose. Over 329–334 (ERAGRR) the chain is Cytoplasmic. The chain crosses the membrane as a helical span at residues 335–355 (TLHLIGLAGMAGCAVLMTIAL). Over 356–365 (ALLEQLPWMS) the chain is Extracellular. The chain crosses the membrane as a helical span at residues 366 to 388 (YLSIVAIFGFVAFFEVGPGPIPW). D-glucose-binding residues include E380 and W388. Topologically, residues 389-401 (FIVAELFSQGPRP) are cytoplasmic. A helical transmembrane segment spans residues 402 to 422 (AAVAVAGFSNWTSNFIVGMCF). At 423-429 (QYVEQLC) the chain is on the extracellular side. Residues 430–450 (GPYVFIIFTVLLVLFFIFTYF) form a helical membrane-spanning segment. The Cytoplasmic portion of the chain corresponds to 451-492 (KVPETKGRTFDEIASGFRQGGASQSDKTPEELFHPLGADSQV). The residue at position 465 (S465) is a Phosphoserine. The disordered stretch occupies residues 468–492 (RQGGASQSDKTPEELFHPLGADSQV). Phosphothreonine is present on T478. S490 bears the Phosphoserine mark.

The protein belongs to the major facilitator superfamily. Sugar transporter (TC 2.A.1.1) family. Glucose transporter subfamily. Found in a complex with ADD2, DMTN and SLC2A1. Interacts (via C-terminus cytoplasmic region) with DMTN. Interacts with SNX27; the interaction is required when endocytosed to prevent degradation in lysosomes and promote recycling to the plasma membrane. Interacts with STOM. Interacts with GIPC (via PDZ domain). Interacts with SGTA (via Gln-rich region). Interacts with isoform 1 of BSG. Interacts with SMIM43; the interaction may promote SLC2A1-mediated glucose transport to meet the energy needs of mesendoderm differentiation. In terms of processing, phosphorylation at Ser-226 by PKC promotes glucose uptake by increasing cell membrane localization. In terms of tissue distribution, detected in osteoblastic cells (at protein level). Detected in brain, and at lower levels in kidney, heart and lung.

It localises to the cell membrane. The protein resides in the photoreceptor inner segment. It catalyses the reaction D-glucose(out) = D-glucose(in). With respect to regulation, the uptake of glucose is inhibited by cytochalasin B. Glucose uptake is increased in response to phorbol ester 12-O-tetradecanoylphorbol-13-acetate (TPA) treatment: TPA-induced glucose uptake requires phosphorylation at Ser-226. In terms of biological role, facilitative glucose transporter, which is responsible for constitutive or basal glucose uptake. Has a very broad substrate specificity; can transport a wide range of aldoses including both pentoses and hexoses. Most important energy carrier of the brain: present at the blood-brain barrier and assures the energy-independent, facilitative transport of glucose into the brain. In association with BSG and NXNL1, promotes retinal cone survival by increasing glucose uptake into photoreceptors. Required for mesendoderm differentiation. In Rattus norvegicus (Rat), this protein is Solute carrier family 2, facilitated glucose transporter member 1.